A 518-amino-acid chain; its full sequence is Protein nucleotidyltransferase YdiU (518 aa).

Residues glycine 100, glycine 102, arginine 103, lysine 123, aspartate 135, glycine 136, arginine 193, and arginine 200 each coordinate ATP. Aspartate 270 serves as the catalytic Proton acceptor. 2 residues coordinate Mg(2+): asparagine 271 and aspartate 280. Residue aspartate 280 participates in ATP binding.

It belongs to the SELO family. Requires Mg(2+) as cofactor. Mn(2+) serves as cofactor.

The enzyme catalyses L-seryl-[protein] + ATP = 3-O-(5'-adenylyl)-L-seryl-[protein] + diphosphate. It carries out the reaction L-threonyl-[protein] + ATP = 3-O-(5'-adenylyl)-L-threonyl-[protein] + diphosphate. It catalyses the reaction L-tyrosyl-[protein] + ATP = O-(5'-adenylyl)-L-tyrosyl-[protein] + diphosphate. The catalysed reaction is L-histidyl-[protein] + UTP = N(tele)-(5'-uridylyl)-L-histidyl-[protein] + diphosphate. The enzyme catalyses L-seryl-[protein] + UTP = O-(5'-uridylyl)-L-seryl-[protein] + diphosphate. It carries out the reaction L-tyrosyl-[protein] + UTP = O-(5'-uridylyl)-L-tyrosyl-[protein] + diphosphate. Functionally, nucleotidyltransferase involved in the post-translational modification of proteins. It can catalyze the addition of adenosine monophosphate (AMP) or uridine monophosphate (UMP) to a protein, resulting in modifications known as AMPylation and UMPylation. The polypeptide is Protein nucleotidyltransferase YdiU (Xanthomonas oryzae pv. oryzae (strain MAFF 311018)).